We begin with the raw amino-acid sequence, 432 residues long: Adenylosuccinate synthetase (432 aa).

Residues 12 to 18 (GDEGKGK) and 40 to 42 (GHT) each bind GTP. Aspartate 13 functions as the Proton acceptor in the catalytic mechanism. Aspartate 13 and glycine 40 together coordinate Mg(2+). Residues 13-16 (DEGK), 38-41 (NAGH), threonine 132, arginine 146, glutamine 226, threonine 241, and arginine 305 each bind IMP. Residue histidine 41 is the Proton donor of the active site. 301–307 (TVTGRKR) provides a ligand contact to substrate. GTP is bound by residues arginine 307, 333–335 (KLD), and 415–417 (STS).

Belongs to the adenylosuccinate synthetase family. As to quaternary structure, homodimer. Requires Mg(2+) as cofactor.

It localises to the cytoplasm. It catalyses the reaction IMP + L-aspartate + GTP = N(6)-(1,2-dicarboxyethyl)-AMP + GDP + phosphate + 2 H(+). The protein operates within purine metabolism; AMP biosynthesis via de novo pathway; AMP from IMP: step 1/2. Plays an important role in the de novo pathway of purine nucleotide biosynthesis. Catalyzes the first committed step in the biosynthesis of AMP from IMP. This is Adenylosuccinate synthetase from Sinorhizobium medicae (strain WSM419) (Ensifer medicae).